Reading from the N-terminus, the 374-residue chain is UPF0496 protein At4g34320 (374 aa).

The next 2 membrane-spanning stretches (helical) occupy residues 215 to 235 and 238 to 258; these read IIFV…AAMA and PVAA…GKWI.

This sequence belongs to the UPF0496 family.

It localises to the membrane. This is UPF0496 protein At4g34320 from Arabidopsis thaliana (Mouse-ear cress).